A 1453-amino-acid chain; its full sequence is ABC transporter G family member 34 (1453 aa).

A disordered region spans residues 1-24 (MLGRDEDLVRTMSGRGSLGSTSHR). One can recognise an ABC transporter 1 domain in the interval 173–446 (LGLFHLLPSK…FEYMGFKCPE (274 aa)). 206–213 (GPPSSGKT) contacts ATP. Positions 524–737 (DLFKACFDRE…GQTALVINEF (214 aa)) constitute an ABC transmembrane type-2 1 domain. Transmembrane regions (helical) follow at residues 542 to 562 (FVYVFKTVQITIMSLIAMTVY), 582 to 602 (LFFSLINLMFNGMAELAFTVM), 621 to 641 (FALPGFLLKIPLSLIESVIWI), 661 to 681 (LLAYFCVNQMALSLFRFLGAL), 687 to 707 (IANSGGTLALLVVFVLGGFII), and 773 to 793 (FWICIGALLGFTVLFNFCYII). The ABC transporter 2 domain maps to 852–1105 (LAFNNVNYYV…LVEYFEAIEG (254 aa)). Residue 897–904 (GVSGAGKT) participates in ATP binding. Residues 1177–1391 (TQTKACFWKM…TLYGIITSQV (215 aa)) enclose the ABC transmembrane type-2 2 domain. 7 helical membrane-spanning segments follow: residues 1196-1216 (YNAIRFLMTVVIGVLFGLLFW), 1230-1250 (NFFGAMYAAVLFLGATNAATV), 1289-1309 (IQTGVYTLILYSMIGYDWTVV), 1311-1331 (FFWFYYYMLTCFVYFTLYGMM), 1341-1361 (IAGICLSFFLSFWNLFSGFLI), 1366-1386 (IPIWWRWYYWASPVAWTLYGI), and 1422-1442 (FLPVVAVVHIAWILIFLFAFA).

It belongs to the ABC transporter superfamily. ABCG family. PDR (TC 3.A.1.205) subfamily. As to expression, expressed in roots at low levels.

It is found in the membrane. Functionally, may be a general defense protein. The protein is ABC transporter G family member 34 (ABCG34) of Arabidopsis thaliana (Mouse-ear cress).